Consider the following 279-residue polypeptide: 2-dehydropantoate 2-reductase (279 aa).

Residues 6–11 (GLGAVG), Lys66, and Asn86 each bind NADP(+). Lys158 serves as the catalytic Proton donor. Residues Lys158, Asn162, Asn166, Asn176, and 225-228 (NLSS) contribute to the substrate site. Glu240 serves as a coordination point for NADP(+).

The protein belongs to the ketopantoate reductase family.

It localises to the cytoplasm. It carries out the reaction (R)-pantoate + NAD(+) = 2-dehydropantoate + NADH + H(+). It catalyses the reaction (R)-pantoate + NADP(+) = 2-dehydropantoate + NADPH + H(+). It functions in the pathway cofactor biosynthesis; coenzyme A biosynthesis. Catalyzes the NAD(P)H-dependent reduction of ketopantoate into pantoic acid. The chain is 2-dehydropantoate 2-reductase from Pyrobaculum aerophilum (strain ATCC 51768 / DSM 7523 / JCM 9630 / CIP 104966 / NBRC 100827 / IM2).